A 166-amino-acid chain; its full sequence is Heavy metal-associated isoprenylated plant protein 45 (166 aa).

The HMA domain maps to Leu-15–Glu-78. A metal cation contacts are provided by Cys-26 and Cys-29. Cys-163 carries the post-translational modification Cysteine methyl ester. Residue Cys-163 is the site of S-farnesyl cysteine attachment. A propeptide spans Thr-164–Met-166 (removed in mature form).

It belongs to the HIPP family.

Its function is as follows. Heavy-metal-binding protein. The polypeptide is Heavy metal-associated isoprenylated plant protein 45 (Arabidopsis thaliana (Mouse-ear cress)).